The chain runs to 879 residues: Phosphoenolpyruvate carboxylase (879 aa).

Residues His138 and Lys545 contribute to the active site.

Belongs to the PEPCase type 1 family. The cofactor is Mg(2+).

The catalysed reaction is oxaloacetate + phosphate = phosphoenolpyruvate + hydrogencarbonate. In terms of biological role, forms oxaloacetate, a four-carbon dicarboxylic acid source for the tricarboxylic acid cycle. The chain is Phosphoenolpyruvate carboxylase (ppc) from Haemophilus influenzae (strain ATCC 51907 / DSM 11121 / KW20 / Rd).